The sequence spans 208 residues: Protein-L-isoaspartate O-methyltransferase (208 aa).

The active site involves serine 59.

It belongs to the methyltransferase superfamily. L-isoaspartyl/D-aspartyl protein methyltransferase family.

Its subcellular location is the cytoplasm. It catalyses the reaction [protein]-L-isoaspartate + S-adenosyl-L-methionine = [protein]-L-isoaspartate alpha-methyl ester + S-adenosyl-L-homocysteine. Functionally, catalyzes the methyl esterification of L-isoaspartyl residues in peptides and proteins that result from spontaneous decomposition of normal L-aspartyl and L-asparaginyl residues. It plays a role in the repair and/or degradation of damaged proteins. The chain is Protein-L-isoaspartate O-methyltransferase from Vibrio atlanticus (strain LGP32) (Vibrio splendidus (strain Mel32)).